Here is a 224-residue protein sequence, read N- to C-terminus: MADEQEIMCKLESIKEIRNKTLQMEKIKARLKAEFEALESEERHLKEYKQEMDLLLQEKMAHVEELRLIHADINVMENTIKQSENDLNKLLESTRRLHDEYKPLKEHVDALRMTLGLQRLPDLCEEEEKLSLDYFEKQKAEWQTEPQEPPIPESLAAAAAAAQQLQVARKQDTRQTATFRQQPPPMKACLSCHQQIHRNAPICPLCKAKSRSRNPKKPKRKQDE.

Residues 11 to 104 (LESIKEIRNK…RRLHDEYKPL (94 aa)) adopt a coiled-coil conformation. The segment at 189 to 206 (CLSCHQQIHRNAPICPLC) adopts a C4H2-type zinc-finger fold.

Expressed in fetal tissues, including in brain, intestine, lung, kidney and muscle. Isoform 1 is expressed in numerous fetal brain regions. Isoform 3 is highly expressed in numerous fetal brain regions and spinal cord.

It localises to the cytoplasm. Its subcellular location is the nucleus. The protein localises to the postsynaptic cell membrane. Functionally, plays a role in interneurons differentiation. Involved in neuronal development and in neuromuscular junction formation. The protein is Zinc finger C4H2 domain-containing protein (ZC4H2) of Homo sapiens (Human).